The following is a 795-amino-acid chain: Phenylalanine--tRNA ligase beta subunit (795 aa).

The region spanning 39 to 148 (ADEFHTVVVG…ADAPVGEDYR (110 aa)) is the tRNA-binding domain. Residues 401–476 (PKRDGITLRA…RVYGYNSIQA (76 aa)) enclose the B5 domain. Positions 454, 460, 463, and 464 each coordinate Mg(2+). Positions 701-794 (SRYPSIRRDL…LKSEFNATLR (94 aa)) constitute an FDX-ACB domain.

It belongs to the phenylalanyl-tRNA synthetase beta subunit family. Type 1 subfamily. Tetramer of two alpha and two beta subunits. Mg(2+) is required as a cofactor.

The protein resides in the cytoplasm. The enzyme catalyses tRNA(Phe) + L-phenylalanine + ATP = L-phenylalanyl-tRNA(Phe) + AMP + diphosphate + H(+). In Idiomarina loihiensis (strain ATCC BAA-735 / DSM 15497 / L2-TR), this protein is Phenylalanine--tRNA ligase beta subunit.